The following is a 361-amino-acid chain: Phospho-N-acetylmuramoyl-pentapeptide-transferase (361 aa).

10 consecutive transmembrane segments (helical) span residues 28–48, 74–94, 99–119, 133–153, 168–188, 203–223, 236–256, 263–283, 288–308, and 338–358; these read LAII…IKFL, TMGG…LADL, IWIT…DDYA, SKLV…EYLD, LNLD…VGSS, VPIA…GNLI, TGEL…FLWF, VFMG…ISVI, IVLA…ILQV, and KVVI…LSSL.

Belongs to the glycosyltransferase 4 family. MraY subfamily. Mg(2+) serves as cofactor.

Its subcellular location is the cell inner membrane. It carries out the reaction UDP-N-acetyl-alpha-D-muramoyl-L-alanyl-gamma-D-glutamyl-meso-2,6-diaminopimeloyl-D-alanyl-D-alanine + di-trans,octa-cis-undecaprenyl phosphate = di-trans,octa-cis-undecaprenyl diphospho-N-acetyl-alpha-D-muramoyl-L-alanyl-D-glutamyl-meso-2,6-diaminopimeloyl-D-alanyl-D-alanine + UMP. The protein operates within cell wall biogenesis; peptidoglycan biosynthesis. Functionally, catalyzes the initial step of the lipid cycle reactions in the biosynthesis of the cell wall peptidoglycan: transfers peptidoglycan precursor phospho-MurNAc-pentapeptide from UDP-MurNAc-pentapeptide onto the lipid carrier undecaprenyl phosphate, yielding undecaprenyl-pyrophosphoryl-MurNAc-pentapeptide, known as lipid I. The sequence is that of Phospho-N-acetylmuramoyl-pentapeptide-transferase from Rickettsia akari (strain Hartford).